The chain runs to 1888 residues: Tensin-1 (1888 aa).

Positions 21–31 are enriched in pro residues; the sequence is PQPPGTPPGPA. Residues 21 to 45 form a disordered region; it reads PQPPGTPPGPARPERCEPGGAAPDP. The segment at 61–108 adopts a Phorbol-ester/DAG-type zinc-finger fold; the sequence is THHFKVKAFKKVKPCGICRQAITREGCVCKVCSFSCHRKCQAKVAAPC. The tract at residues 132-174 is disordered; the sequence is GEGDCRVGSSPKNLEEGGSMRVSPSIQPQPQSQPTSLSRNTSV. Residues 154-167 show a composition bias toward low complexity; the sequence is SPSIQPQPQSQPTS. Residues 175–347 enclose the Phosphatase tensin-type domain; that stretch reads SRAMEDSCEL…HYFSGLLSGS (173 aa). Residues 352–478 form the C2 tensin-type domain; it reads NKPLFLHHVI…GKVEFVFSYG (127 aa). Phosphoserine occurs at positions 509 and 535. Position 537 is a phosphotyrosine (tyrosine 537). 3 disordered regions span residues 543-608, 696-722, and 789-854; these read KDSL…PQEK, VTNT…YSTE, and RSQS…SAET. At serine 549 the chain carries Phosphoserine. Residues 571–584 show a composition bias toward polar residues; the sequence is LSVSSDSGNSTAST. Position 604 is a phosphoserine (serine 604). Serine 792 bears the Phosphoserine mark. Polar residues predominate over residues 835–852; sequence RSPLQSLARSKPSPQLSA. Serine 867 bears the Phosphoserine mark. 2 disordered regions span residues 893–1077 and 1109–1555; these read PLHK…RSPV and EEME…AGSL. Positions 905–922 are enriched in low complexity; sequence PGASPLSSQPLLGSSRQS. Serine 930, serine 935, and serine 952 each carry phosphoserine. Residues 962–986 are compositionally biased toward polar residues; it reads GSNQSFHPKSPASSTFLPSPHSSAG. Threonine 1015 bears the Phosphothreonine mark. A Phosphoserine modification is found at serine 1054. The span at 1057–1069 shows a compositional bias: polar residues; the sequence is QYENQSPEATSPR. Position 1058 is a phosphotyrosine (tyrosine 1058). Phosphoserine occurs at positions 1062, 1118, and 1122. Over residues 1169-1179 the composition is skewed to basic and acidic residues; sequence EVTKPPEEPRS. A compositionally biased stretch (low complexity) spans 1227-1239; the sequence is SPSPLSTSSPILS. Positions 1240-1257 are enriched in polar residues; the sequence is ADSTSVGSFPSVVSSDQG. Phosphoserine is present on serine 1279. The span at 1284 to 1300 shows a compositional bias: low complexity; sequence SYQSSSPVPVGGSSYNS. Positions 1301 to 1322 are enriched in polar residues; the sequence is PDYSLQPFSSSPESQGQPQYSA. Residue serine 1321 is glycosylated (O-linked (GalNAc...) serine). Serine 1331 bears the Phosphoserine mark. Threonine 1343 is modified (phosphothreonine). Residue serine 1346 is modified to Phosphoserine. Threonine 1420 bears the Phosphothreonine mark. A Phosphoserine modification is found at serine 1423. Residues 1436–1446 are compositionally biased toward polar residues; the sequence is NLASSLHSNAV. A phosphoserine mark is found at serine 1448, serine 1463, and serine 1468. The span at 1490–1507 shows a compositional bias: polar residues; that stretch reads LSRQSSASGYQAPSTPSF. The segment covering 1518 to 1530 has biased composition (low complexity); the sequence is SSPATSPSPDSAA. Phosphoserine is present on residues serine 1535, serine 1547, serine 1554, and serine 1599. The region spanning 1616–1725 is the SH2 domain; sequence WYKPEISREQ…ALPCKLVIPS (110 aa). Residue serine 1741 is modified to Phosphoserine. The PTB domain occupies 1751 to 1885; sequence ACNVLFVNSV…FVSKVMLSAG (135 aa).

This sequence belongs to the PTEN phosphatase protein family. In terms of assembly, binds to actin filaments and interacts with phosphotyrosine-containing proteins. Interacts with STARD8. Interacts with protein phosphatase PPP1CA. Interacts (via N-terminus) with Rho GTPase-activating protein DLC1; the interaction is decreased by phosphorylation of TNS1. Interacts with tyrosine-phosphorylated proteins BCAR1/p130Cas and PTK2/FAK; the interactions are increased by phosphorylation of TNS1. In terms of processing, extensively phosphorylated on serine and threonine residues in a p38 MAPK-dependent manner which reduces interaction with DLC1 and increases interaction with tyrosine-phosphorylated proteins including BCAR1/p130cas and PTK2/FAK. The majority of the phosphorylated Ser/Thr residues are immediately adjacent to a proline residue. Also phosphorylated on tyrosine residues. Post-translationally, rapidly cleaved by calpain II.

It localises to the cell surface. The protein localises to the cell junction. It is found in the focal adhesion. The protein resides in the cytoplasm. Its subcellular location is the cytoskeleton. Functionally, may act as a protein phosphatase and/or a lipid phosphatase. Involved in fibrillar adhesion formation. Essential for myofibroblast differentiation and myofibroblast-mediated extracellular matrix deposition. Enhances RHOA activation in the presence of DLC1. Plays a role in cell polarization and migration. May be involved in cartilage development and in linking signal transduction pathways to the cytoskeleton. The protein is Tensin-1 of Mus musculus (Mouse).